A 108-amino-acid polypeptide reads, in one-letter code: U-scoloptoxin(10)-Sm1a (108 aa).

The N-terminal stretch at 1–24 (MNKQWLHFFSVLLLCYVIEETCSL) is a signal peptide.

This sequence belongs to the scoloptoxin-10 family. In terms of processing, contains 3 disulfide bonds. As to expression, expressed by the venom gland.

It localises to the secreted. The chain is U-scoloptoxin(10)-Sm1a from Scolopendra morsitans (Tanzanian blue ringleg centipede).